The chain runs to 425 residues: MGKDYQVLGKNKVKVDSLEKVMGTAKFAADYSFPDMLYAGVFRSTVPHARIVSLDLSKARAIDGVEAVLDYHAIPGKNRFGIIIKDEPCLVDDKVRRYGDAIAVVAAQTPDLVQEALDAITIEYEELEGIFTMERALEEDSPAIHGDTNIHQVKHLEYGDVDAAFKQCDIVVEDTYSTHRLTHMFIEPDAGVSYYDNEGMLTVVVSTQNPHYDRGEVAGMLALPNSKVRIIQATTGGGFGGKLDLSVQCHCALLTYHTKKPVKMVRSREESTTVSSKRHPMTMHCKTGATKDGRLQAVQVEMFGDTGAYASYGPAVITRATVHCMGPYVVPNVRVDAKFVYTNNPMSGAFRGFGVPQASVCHEGQMNALAKALGMDPIDIRILNAHQVGAKLATGQVLENSVGLIETLEKAREKAVEVMGYEKTR.

Residues Gln-208 and 238–240 (GFG) contribute to the Se-Mo-molybdopterin cytosine dinucleotide site.

It belongs to the xanthine dehydrogenase family. In terms of assembly, heterooctamer of NDHM, NDHL, NDHS and NDHF. Dimer of heterotetramers. The cofactor is Se-Mo-molybdopterin cytosine dinucleotide.

The enzyme catalyses nicotinate + NADP(+) + H2O = 6-hydroxynicotinate + NADPH + H(+). The protein operates within cofactor degradation; nicotinate degradation; 6-hydroxynicotinate from nicotinate: step 1/1. With respect to regulation, reversibly inactivated by selenide and sulfide. Not inhibited by cyanide. Its function is as follows. Catalyzes the hydroxylation of nicotinate to 6-hydroxynicotinate. Also active against 2-pyrazinecarboxylic acid, but inactive against other nicotinate analogs. The sequence is that of Nicotinate dehydrogenase large molybdopterin subunit (ndhL) from Eubacterium barkeri (Clostridium barkeri).